The primary structure comprises 668 residues: SH2 domain-containing protein B (668 aa).

The segment at 373–411 (SVSGSEESYQQCNSHPQTSRQFENGNGMRLHEEDNSSID) is disordered. The span at 374 to 396 (VSGSEESYQQCNSHPQTSRQFEN) shows a compositional bias: polar residues. Residues 574–642 (WIEGFITKEE…DNICESSERY (69 aa)) enclose the SH2 domain.

Post-translationally, phosphorylated on tyrosine residues. As to expression, expressed in roots, leaves, stems and flowers.

The protein is SH2 domain-containing protein B of Arabidopsis thaliana (Mouse-ear cress).